Reading from the N-terminus, the 228-residue chain is Ephrin-A5b (228 aa).

The first 20 residues, 1–20 (MLQAEMIVFVGVILWMCVFS), serve as a signal peptide directing secretion. Residues 29–162 (ADRYAVFWNR…KLKVFVRPPN (134 aa)) form the Ephrin RBD domain. N37 carries N-linked (GlcNAc...) asparagine glycosylation. Intrachain disulfides connect C62-C102 and C90-C151. A compositionally biased stretch (basic and acidic residues) spans 184-198 (LEPRDDTSHEAEPSR). The disordered stretch occupies residues 184 to 205 (LEPRDDTSHEAEPSRSDVSTSG). The GPI-anchor amidated serine moiety is linked to residue S204. Residues 205–228 (GLRHQTSRPLLALLLLCISLYLLL) constitute a propeptide, removed in mature form.

Belongs to the ephrin family. As to expression, widespread expression in the embryo.

The protein resides in the cell membrane. Its function is as follows. Cell surface GPI-bound ligand for Eph receptors, a family of receptor tyrosine kinases which are crucial for migration, repulsion and adhesion during neuronal, vascular and epithelial development. Binds promiscuously Eph receptors residing on adjacent cells, leading to contact-dependent bidirectional signaling into neighboring cells. Induces compartmentalized signaling within a caveolae-like membrane microdomain when bound to the extracellular domain of its cognate receptor. This signaling event requires the activity of the Fyn tyrosine kinase. Activates the epha3 receptor to regulate cell-cell adhesion and cytoskeletal organization. With the receptor epha2 may regulate lens fiber cells shape and interactions and be important for lens transparency maintenance. May function actively to stimulate axon fasciculation. Controls axon growth and may be involved in the creation of the retino-tectal map. In Danio rerio (Zebrafish), this protein is Ephrin-A5b (efna5b).